A 196-amino-acid chain; its full sequence is Nucleoid occlusion factor SlmA (196 aa).

The HTH tetR-type domain occupies 7–68 (SNRREEILQA…GLIEFIEEAL (62 aa)). The segment at residues 31-50 (TTAKLAQQVGVSEAALYRHF) is a DNA-binding region (H-T-H motif). Positions 65-142 (EEALMSRINR…QLRQILRERK (78 aa)) form a coiled coil.

The protein belongs to the nucleoid occlusion factor SlmA family. Homodimer. Interacts with FtsZ.

The protein localises to the cytoplasm. The protein resides in the nucleoid. In terms of biological role, required for nucleoid occlusion (NO) phenomenon, which prevents Z-ring formation and cell division over the nucleoid. Acts as a DNA-associated cell division inhibitor that binds simultaneously chromosomal DNA and FtsZ, and disrupts the assembly of FtsZ polymers. SlmA-DNA-binding sequences (SBS) are dispersed on non-Ter regions of the chromosome, preventing FtsZ polymerization at these regions. This chain is Nucleoid occlusion factor SlmA, found in Vibrio vulnificus (strain CMCP6).